A 347-amino-acid chain; its full sequence is N-acetyl-gamma-glutamyl-phosphate reductase (347 aa).

Cysteine 151 is an active-site residue.

The protein belongs to the NAGSA dehydrogenase family. Type 1 subfamily.

It localises to the cytoplasm. It carries out the reaction N-acetyl-L-glutamate 5-semialdehyde + phosphate + NADP(+) = N-acetyl-L-glutamyl 5-phosphate + NADPH + H(+). Its pathway is amino-acid biosynthesis; L-arginine biosynthesis; N(2)-acetyl-L-ornithine from L-glutamate: step 3/4. Its function is as follows. Catalyzes the NADPH-dependent reduction of N-acetyl-5-glutamyl phosphate to yield N-acetyl-L-glutamate 5-semialdehyde. The chain is N-acetyl-gamma-glutamyl-phosphate reductase from Corynebacterium glutamicum (strain R).